The chain runs to 295 residues: Light-independent protochlorophyllide reductase iron-sulfur ATP-binding protein (295 aa).

Residues 39-44 (GIGKST) and Lys-68 each bind ATP. Ser-43 contributes to the Mg(2+) binding site. Cys-124 and Cys-158 together coordinate [4Fe-4S] cluster. Residues 209-210 (NR) and 233-235 (PDL) each bind ATP.

It belongs to the NifH/BchL/ChlL family. As to quaternary structure, homodimer. Protochlorophyllide reductase is composed of three subunits; BchL, BchN and BchB. [4Fe-4S] cluster is required as a cofactor.

It carries out the reaction chlorophyllide a + oxidized 2[4Fe-4S]-[ferredoxin] + 2 ADP + 2 phosphate = protochlorophyllide a + reduced 2[4Fe-4S]-[ferredoxin] + 2 ATP + 2 H2O. It functions in the pathway porphyrin-containing compound metabolism; bacteriochlorophyll biosynthesis (light-independent). In terms of biological role, component of the dark-operative protochlorophyllide reductase (DPOR) that uses Mg-ATP and reduced ferredoxin to reduce ring D of protochlorophyllide (Pchlide) to form chlorophyllide a (Chlide). This reaction is light-independent. The L component serves as a unique electron donor to the NB-component of the complex, and binds Mg-ATP. The polypeptide is Light-independent protochlorophyllide reductase iron-sulfur ATP-binding protein (Rhodospirillum rubrum (strain ATCC 11170 / ATH 1.1.1 / DSM 467 / LMG 4362 / NCIMB 8255 / S1)).